A 515-amino-acid polypeptide reads, in one-letter code: Interferon alpha/beta receptor 2 (515 aa).

The first 26 residues, 1-26 (MLLSQNAFIFRSLNLVLMVYISLVFG), serve as a signal peptide directing secretion. The Extracellular segment spans residues 27-243 (ISYDSPDYTD…QESESAESAK (217 aa)). Disulfide bonds link C39–C122 and C85–C93. N58, N87, N116, N188, and N192 each carry an N-linked (GlcNAc...) asparagine glycan. A disulfide bond links C207 and C227. Residues 244–264 (IGGIITVFLIALVLTSTIVTL) form a helical membrane-spanning segment. Topologically, residues 265–515 (KWIGYICLRN…VDLGDGYIMR (251 aa)) are cytoplasmic. Disordered regions lie at residues 318-418 (YDDE…EGSG) and 455-515 (EMVD…YIMR). Y337 carries the phosphotyrosine modification. Positions 362–375 (PESEEEPDLPEVDV) are enriched in acidic residues. S400 bears the Phosphoserine mark. Residues 418–444 (GGRITFNVDLNSVFLRVLDDEDSDDLE) are mediates interaction with STAT2 (and required for the recruitment of USP18). The segment covering 464-488 (NVQSNHLLASGEGTQPTFPSPSSEG) has biased composition (polar residues). The residue at position 467 (S467) is a Phosphoserine. The residue at position 512 (Y512) is a Phosphotyrosine.

It belongs to the type II cytokine receptor family. Heterodimer with IFNAR1; forming the receptor for type I interferon. Interacts with JAK1. Interacts with the transcriptional factors STAT1 and STAT2. Interacts with USP18; indirectly via STAT2, it negatively regulates the assembly of the ternary interferon-IFNAR1-IFNAR2 complex and therefore type I interferon signaling. In terms of processing, phosphorylated on tyrosine residues upon interferon binding. Phosphorylation at Tyr-337 or Tyr-512 are sufficient to mediate interferon dependent activation of STAT1, STAT2 and STAT3 leading to antiproliferative effects on many different cell types. Post-translationally, glycosylated. In terms of tissue distribution, isoform 3 is detected in the urine (at protein level). Expressed in blood cells. Expressed in lymphoblastoid and fibrosarcoma cell lines.

It localises to the cell membrane. Its subcellular location is the secreted. Together with IFNAR1, forms the heterodimeric receptor for type I interferons (including interferons alpha, beta, epsilon, omega and kappa). Type I interferon binding activates the JAK-STAT signaling cascade, resulting in transcriptional activation or repression of interferon-regulated genes that encode the effectors of the interferon response. Mechanistically, type I interferon-binding brings the IFNAR1 and IFNAR2 subunits into close proximity with one another, driving their associated Janus kinases (JAKs) (TYK2 bound to IFNAR1 and JAK1 bound to IFNAR2) to cross-phosphorylate one another. The activated kinases phosphorylate specific tyrosine residues on the intracellular domains of IFNAR1 and IFNAR2, forming docking sites for the STAT transcription factors (STAT1, STAT2 and STAT). STAT proteins are then phosphorylated by the JAKs, promoting their translocation into the nucleus to regulate expression of interferon-regulated genes. In terms of biological role, potent inhibitor of type I IFN receptor activity. The polypeptide is Interferon alpha/beta receptor 2 (IFNAR2) (Homo sapiens (Human)).